We begin with the raw amino-acid sequence, 597 residues long: Putative heat shock protein HSP 90-beta-3 (597 aa).

ATP-binding residues include N46, D88, and K107. A disordered region spans residues 201–241 (DKEISDDEAEEEKGEKEEEDKDDEEKPKIKDVGSDEEDDSK). Positions 204–223 (ISDDEAEEEKGEKEEEDKDD) are enriched in acidic residues. A compositionally biased stretch (basic and acidic residues) spans 224–233 (EEKPKIKDVG). R334 contributes to the ATP binding site. A coiled-coil region spans residues 414–446 (LELPEDEEEKKKMEESKEKFENLCKLMKEILDK). Residues 564 to 578 (DEDEVAAEEPSDAVP) are compositionally biased toward acidic residues. Positions 564–597 (DEDEVAAEEPSDAVPDEIPPLEGDEDASRMEEVD) are disordered. The TPR repeat-binding motif lies at 593 to 597 (MEEVD).

The protein belongs to the heat shock protein 90 family. Homodimer.

It localises to the cytoplasm. Functionally, putative molecular chaperone that may promote the maturation, structural maintenance and proper regulation of specific target proteins. The protein is Putative heat shock protein HSP 90-beta-3 (HSP90AB3P) of Homo sapiens (Human).